Consider the following 346-residue polypeptide: Uroporphyrinogen decarboxylase (346 aa).

Substrate is bound by residues 21 to 25 (RQAGR), D71, Y146, S201, and H316.

This sequence belongs to the uroporphyrinogen decarboxylase family. As to quaternary structure, homodimer.

The protein localises to the cytoplasm. It carries out the reaction uroporphyrinogen III + 4 H(+) = coproporphyrinogen III + 4 CO2. It participates in porphyrin-containing compound metabolism; protoporphyrin-IX biosynthesis; coproporphyrinogen-III from 5-aminolevulinate: step 4/4. Catalyzes the decarboxylation of four acetate groups of uroporphyrinogen-III to yield coproporphyrinogen-III. This Rickettsia rickettsii (strain Iowa) protein is Uroporphyrinogen decarboxylase.